We begin with the raw amino-acid sequence, 1020 residues long: LLGL scribble cell polarity complex component 2 (1020 aa).

WD repeat units lie at residues 36–69, 76–117, 132–169, 193–227, 233–268, 282–324, 332–366, 388–464, 508–583, 592–653, 713–769, 778–830, 835–888, and 902–925; these read SALGYSPSLRILAIGTRSGAIKLYGAPGVEFMGL, VTQI…DESF, ITVVLPHSSCELLYLGTESGNVFVVQLPAFRALEDRTI, ALQEHPRDPNQILIGYSRGLVVIWDLQGSRVLYHF, LENIWWQRDGRLLVSCHSDGSYCQWPVSSEAQQPEP, AITR…GQQT, VIGFTVLTEADPAATFDDPYALVVLAEEELVVIDL, TCSH…YKLS, QKIF…FVLV, TSLA…LRQS, VRTL…KEIQ, GILV…VSAK, LTAL…VRYS, and VFTKYGQGFYLISPSEFERFSLST. Ser-653 carries the phosphoserine modification. Basic residues predominate over residues 653 to 669; it reads SFRRMRRSRVSSRKRHP. Residues 653-689 form a disordered region; sequence SFRRMRRSRVSSRKRHPAGPPGEAQEGSAKAERPGLQ. 2 disordered regions span residues 938–975 and 992–1020; these read AETKNHRPGNGAGPKKAPSRARNSGTQSDGEEKQPGLV and STLEGDRGSGNWRSHRAAVGCSLSNGGAE. 2 positions are modified to phosphoserine: Ser-965 and Ser-1015.

This sequence belongs to the WD repeat L(2)GL family. Interacts with GPSM2/LGN, PRKCI/aPKC and PARD6B/Par-6. The complex is enhanced during mitosis. Interacts with DCAF1. Post-translationally, phosphorylated at Ser-653 by PRKCI. Phosphorylation is enhanced during cell polarization induced by calcium. Phosphorylation may occur during the cell-cell contact-induced cell polarization and may contribute to the segregation of LLGL2 from the PRKCI/aPKC and PARD6B/Par-6 complex.

Its subcellular location is the cytoplasm. Functionally, part of a complex with GPSM2/LGN, PRKCI/aPKC and PARD6B/Par-6, which may ensure the correct organization and orientation of bipolar spindles for normal cell division. This complex plays roles in the initial phase of the establishment of epithelial cell polarity. The sequence is that of LLGL scribble cell polarity complex component 2 (LLGL2) from Homo sapiens (Human).